A 406-amino-acid polypeptide reads, in one-letter code: Tryptophan synthase beta chain (406 aa).

Lys-99 is subject to N6-(pyridoxal phosphate)lysine.

This sequence belongs to the TrpB family. Tetramer of two alpha and two beta chains. The cofactor is pyridoxal 5'-phosphate.

The catalysed reaction is (1S,2R)-1-C-(indol-3-yl)glycerol 3-phosphate + L-serine = D-glyceraldehyde 3-phosphate + L-tryptophan + H2O. The protein operates within amino-acid biosynthesis; L-tryptophan biosynthesis; L-tryptophan from chorismate: step 5/5. Its function is as follows. The beta subunit is responsible for the synthesis of L-tryptophan from indole and L-serine. The chain is Tryptophan synthase beta chain from Allorhizobium ampelinum (strain ATCC BAA-846 / DSM 112012 / S4) (Agrobacterium vitis (strain S4)).